A 359-amino-acid chain; its full sequence is MAEYGAHITTASVADDQPSIFEVVAQDSLMTAVRPALQHVVKVLAESNPAHYGFLWRWFDEIFTLLDFLLQQHYLSRTSASFSEHFYGLKRIVAGSSPHLQRPASAGLPKEHLWKSAMFLVLLPYLKVKLEKLASSLREEDEYSIHPPSSRWKRFYRAFLAAYPFVNMAWEGWFLTQQLRYILGKAEHHSPLLKLAGVRLARLTAQDMQAIKQRLVEASAMQEPVRSVGEKIKSALKKAVGGVALSLSTGLSVGVFFLQFLDWWYSSENQEAIKSLTALPTPPPPVHLDYNSDSPLLPKMKTVCPLCRKTRVNDTVLATSGYVFCYRCVFNYVRSHQACPITGYPTEVQHLIKLYSPEN.

Over 1–19 (MAEYGAHITTASVADDQPS) the chain is Peroxisomal matrix. The chain crosses the membrane as a helical span at residues 20-47 (IFEVVAQDSLMTAVRPALQHVVKVLAES). Topologically, residues 48–51 (NPAH) are cytoplasmic. A helical transmembrane segment spans residues 52–76 (YGFLWRWFDEIFTLLDFLLQQHYLS). Residues 77 to 109 (RTSASFSEHFYGLKRIVAGSSPHLQRPASAGLP) lie on the Peroxisomal matrix side of the membrane. The helical transmembrane segment at 110-139 (KEHLWKSAMFLVLLPYLKVKLEKLASSLRE) threads the bilayer. Residues 140–144 (EDEYS) are Cytoplasmic-facing. Residues 145–183 (IHPPSSRWKRFYRAFLAAYPFVNMAWEGWFLTQQLRYIL) form a helical membrane-spanning segment. The Peroxisomal matrix segment spans residues 184–249 (GKAEHHSPLL…VGGVALSLST (66 aa)). Residues 250 to 277 (GLSVGVFFLQFLDWWYSSENQEAIKSLT) traverse the membrane as a helical segment. Residues 278 to 359 (ALPTPPPPVH…HLIKLYSPEN (82 aa)) lie on the Cytoplasmic side of the membrane. Zn(2+) contacts are provided by Cys304, Cys307, Cys325, and Cys328. Residues 304–343 (CPLCRKTRVNDTVLATSGYVFCYRCVFNYVRSHQACPITG) form an RING-type; degenerate zinc finger.

Belongs to the pex2/pex10/pex12 family. As to quaternary structure, component of the PEX2-PEX10-PEX12 retrotranslocation channel, composed of PEX2, PEX10 and PEX12. Interacts with PEX19 via its cytoplasmic domain.

The protein resides in the peroxisome membrane. It participates in protein modification; protein ubiquitination. Functionally, component of a retrotranslocation channel required for peroxisome organization by mediating export of the PEX5 receptor from peroxisomes to the cytosol, thereby promoting PEX5 recycling. The retrotranslocation channel is composed of PEX2, PEX10 and PEX12; each subunit contributing transmembrane segments that coassemble into an open channel that specifically allows the passage of PEX5 through the peroxisomal membrane. PEX12 also regulates PEX5 recycling by activating the E3 ubiquitin-protein ligase activity of PEX10. When PEX5 recycling is compromised, PEX12 stimulates PEX10-mediated polyubiquitination of PEX5, leading to its subsequent degradation. In Mus musculus (Mouse), this protein is Peroxisome assembly protein 12 (Pex12).